A 361-amino-acid chain; its full sequence is Phosphoserine aminotransferase (361 aa).

Arginine 43 contributes to the L-glutamate binding site. Pyridoxal 5'-phosphate is bound by residues 77 to 78, tryptophan 103, threonine 153, aspartate 173, and glutamine 196; that span reads AS. The residue at position 197 (lysine 197) is an N6-(pyridoxal phosphate)lysine. 238–239 is a binding site for pyridoxal 5'-phosphate; the sequence is NT.

Belongs to the class-V pyridoxal-phosphate-dependent aminotransferase family. SerC subfamily. Homodimer. Pyridoxal 5'-phosphate is required as a cofactor.

Its subcellular location is the cytoplasm. It carries out the reaction O-phospho-L-serine + 2-oxoglutarate = 3-phosphooxypyruvate + L-glutamate. It catalyses the reaction 4-(phosphooxy)-L-threonine + 2-oxoglutarate = (R)-3-hydroxy-2-oxo-4-phosphooxybutanoate + L-glutamate. Its pathway is amino-acid biosynthesis; L-serine biosynthesis; L-serine from 3-phospho-D-glycerate: step 2/3. It participates in cofactor biosynthesis; pyridoxine 5'-phosphate biosynthesis; pyridoxine 5'-phosphate from D-erythrose 4-phosphate: step 3/5. Its function is as follows. Catalyzes the reversible conversion of 3-phosphohydroxypyruvate to phosphoserine and of 3-hydroxy-2-oxo-4-phosphonooxybutanoate to phosphohydroxythreonine. This is Phosphoserine aminotransferase from Pseudomonas fluorescens (strain SBW25).